We begin with the raw amino-acid sequence, 113 residues long: U11-theraphotoxin-Hhn1q (113 aa).

A signal peptide spans 1 to 21 (MNTVRVTFLLVFVLAVSLGQA). The propeptide occupies 22–74 (DKDENRMEMQEKTEQGKSYLDFAENLLLQKLEELEAKLLEEDSEESRNSRQKR). Residues 61–82 (EEDSEESRNSRQKRCIGEGVPC) form a disordered region. 3 cysteine pairs are disulfide-bonded: cysteine 75–cysteine 90, cysteine 82–cysteine 95, and cysteine 89–cysteine 110.

Belongs to the neurotoxin 14 (magi-1) family. 01 (HNTX-16) subfamily. In terms of tissue distribution, expressed by the venom gland.

Its subcellular location is the secreted. Functionally, probable ion channel inhibitor. The chain is U11-theraphotoxin-Hhn1q from Cyriopagopus hainanus (Chinese bird spider).